Reading from the N-terminus, the 297-residue chain is UDP-3-O-acyl-N-acetylglucosamine deacetylase (297 aa).

Residues H79, H238, and D242 each contribute to the Zn(2+) site. H265 acts as the Proton donor in catalysis.

Belongs to the LpxC family. Zn(2+) is required as a cofactor.

It catalyses the reaction a UDP-3-O-[(3R)-3-hydroxyacyl]-N-acetyl-alpha-D-glucosamine + H2O = a UDP-3-O-[(3R)-3-hydroxyacyl]-alpha-D-glucosamine + acetate. It functions in the pathway glycolipid biosynthesis; lipid IV(A) biosynthesis; lipid IV(A) from (3R)-3-hydroxytetradecanoyl-[acyl-carrier-protein] and UDP-N-acetyl-alpha-D-glucosamine: step 2/6. In terms of biological role, catalyzes the hydrolysis of UDP-3-O-myristoyl-N-acetylglucosamine to form UDP-3-O-myristoylglucosamine and acetate, the committed step in lipid A biosynthesis. The protein is UDP-3-O-acyl-N-acetylglucosamine deacetylase of Blochmanniella pennsylvanica (strain BPEN).